The sequence spans 314 residues: Homoserine O-succinyltransferase (314 aa).

The Acyl-thioester intermediate role is filled by Cys-142. Residues Lys-163 and Ser-192 each coordinate substrate. The Proton acceptor role is filled by His-235. Residue Glu-237 is part of the active site. Arg-249 is a binding site for substrate.

It belongs to the MetA family.

The protein resides in the cytoplasm. The enzyme catalyses L-homoserine + succinyl-CoA = O-succinyl-L-homoserine + CoA. It functions in the pathway amino-acid biosynthesis; L-methionine biosynthesis via de novo pathway; O-succinyl-L-homoserine from L-homoserine: step 1/1. Functionally, transfers a succinyl group from succinyl-CoA to L-homoserine, forming succinyl-L-homoserine. This is Homoserine O-succinyltransferase from Shewanella woodyi (strain ATCC 51908 / MS32).